The sequence spans 1356 residues: DNA-directed RNA polymerase subunit beta (1356 aa).

It belongs to the RNA polymerase beta chain family. In terms of assembly, the RNAP catalytic core consists of 2 alpha, 1 beta, 1 beta' and 1 omega subunit. When a sigma factor is associated with the core the holoenzyme is formed, which can initiate transcription.

It carries out the reaction RNA(n) + a ribonucleoside 5'-triphosphate = RNA(n+1) + diphosphate. Its function is as follows. DNA-dependent RNA polymerase catalyzes the transcription of DNA into RNA using the four ribonucleoside triphosphates as substrates. This is DNA-directed RNA polymerase subunit beta from Caulobacter vibrioides (strain ATCC 19089 / CIP 103742 / CB 15) (Caulobacter crescentus).